The primary structure comprises 234 residues: 3-deoxy-manno-octulosonate cytidylyltransferase (234 aa).

The protein belongs to the KdsB family.

The protein localises to the cytoplasm. It carries out the reaction 3-deoxy-alpha-D-manno-oct-2-ulosonate + CTP = CMP-3-deoxy-beta-D-manno-octulosonate + diphosphate. It participates in nucleotide-sugar biosynthesis; CMP-3-deoxy-D-manno-octulosonate biosynthesis; CMP-3-deoxy-D-manno-octulosonate from 3-deoxy-D-manno-octulosonate and CTP: step 1/1. Its pathway is bacterial outer membrane biogenesis; lipopolysaccharide biosynthesis. Its function is as follows. Activates KDO (a required 8-carbon sugar) for incorporation into bacterial lipopolysaccharide in Gram-negative bacteria. The polypeptide is 3-deoxy-manno-octulosonate cytidylyltransferase (Aquifex aeolicus (strain VF5)).